The primary structure comprises 123 residues: Small ribosomal subunit protein uS12cz/uS12cy (123 aa).

Belongs to the universal ribosomal protein uS12 family. As to quaternary structure, part of the 30S ribosomal subunit.

The protein resides in the plastid. It is found in the chloroplast. Functionally, with S4 and S5 plays an important role in translational accuracy. Located at the interface of the 30S and 50S subunits. This is Small ribosomal subunit protein uS12cz/uS12cy (rps12-A) from Populus alba (White poplar).